A 431-amino-acid chain; its full sequence is 3-deoxy-D-manno-octulosonic acid transferase (431 aa).

A helical; Signal-anchor membrane pass occupies residues Trp-5–Phe-27. Glu-67 serves as the catalytic Proton acceptor. Residues Pro-275–Arg-276, Met-315–Val-317, and Asn-342–Glu-345 each bind CMP.

It belongs to the glycosyltransferase group 1 family. Glycosyltransferase 30 subfamily.

The protein localises to the cell inner membrane. The catalysed reaction is lipid IVA (E. coli) + CMP-3-deoxy-beta-D-manno-octulosonate = alpha-Kdo-(2-&gt;6)-lipid IVA (E. coli) + CMP + H(+). The enzyme catalyses alpha-Kdo-(2-&gt;6)-lipid IVA (E. coli) + CMP-3-deoxy-beta-D-manno-octulosonate = alpha-Kdo-(2-&gt;4)-alpha-Kdo-(2-&gt;6)-lipid IVA (E. coli) + CMP + H(+). It catalyses the reaction alpha-Kdo-(2-&gt;4)-alpha-Kdo-(2-&gt;6)-lipid IVA (E. coli) + CMP-3-deoxy-beta-D-manno-octulosonate = alpha-Kdo-(2-&gt;8)-alpha-Kdo-(2-&gt;4)-alpha-Kdo-(2-&gt;6)-lipid IVA (E. coli) + CMP + H(+). The protein operates within bacterial outer membrane biogenesis; LPS core biosynthesis. Functionally, involved in lipopolysaccharide (LPS) biosynthesis. Catalyzes the transfer of three 3-deoxy-D-manno-octulosonate (Kdo) residues from CMP-Kdo to lipid IV(A), the tetraacyldisaccharide-1,4'-bisphosphate precursor of lipid A. Thus generates the genus-specific LPS epitope of Chlamydia, composed of the trisaccharide alpha-Kdo-(2-&gt;8)-alpha-Kdo-(2-&gt;4)-alpha-Kdo. In Chlamydia trachomatis serovar D (strain ATCC VR-885 / DSM 19411 / UW-3/Cx), this protein is 3-deoxy-D-manno-octulosonic acid transferase (waaA).